The chain runs to 121 residues: Large ribosomal subunit protein bL20 (121 aa).

The protein belongs to the bacterial ribosomal protein bL20 family.

Its function is as follows. Binds directly to 23S ribosomal RNA and is necessary for the in vitro assembly process of the 50S ribosomal subunit. It is not involved in the protein synthesizing functions of that subunit. The chain is Large ribosomal subunit protein bL20 (rplT) from Chlamydia pneumoniae (Chlamydophila pneumoniae).